We begin with the raw amino-acid sequence, 698 residues long: DNA ligase (698 aa).

NAD(+)-binding positions include 40–44 (DDVYD), 89–90 (SL), and E123. Residue K125 is the N6-AMP-lysine intermediate of the active site. NAD(+)-binding residues include R146, E184, K300, and K324. Zn(2+) is bound by residues C417, C420, C435, and C441. Residues 618-698 (SSASPVAGKA…EWLALTGAAD (81 aa)) enclose the BRCT domain.

Belongs to the NAD-dependent DNA ligase family. LigA subfamily. Requires Mg(2+) as cofactor. The cofactor is Mn(2+).

It catalyses the reaction NAD(+) + (deoxyribonucleotide)n-3'-hydroxyl + 5'-phospho-(deoxyribonucleotide)m = (deoxyribonucleotide)n+m + AMP + beta-nicotinamide D-nucleotide.. DNA ligase that catalyzes the formation of phosphodiester linkages between 5'-phosphoryl and 3'-hydroxyl groups in double-stranded DNA using NAD as a coenzyme and as the energy source for the reaction. It is essential for DNA replication and repair of damaged DNA. The chain is DNA ligase from Paramagnetospirillum magneticum (strain ATCC 700264 / AMB-1) (Magnetospirillum magneticum).